We begin with the raw amino-acid sequence, 305 residues long: Beta-lactamase ROB-1 (305 aa).

The N-terminal stretch at 1 to 33 is a signal peptide; sequence MLNKLKIGTLLLLTLTACSPNSVHSVTSNPQPA. Ser86 (acyl-ester intermediate) is an active-site residue. A substrate-binding site is contributed by 248–250; the sequence is KSG.

The protein belongs to the class-A beta-lactamase family.

It catalyses the reaction a beta-lactam + H2O = a substituted beta-amino acid. This is Beta-lactamase ROB-1 (rob1) from Actinobacillus pleuropneumoniae (Haemophilus pleuropneumoniae).